A 303-amino-acid polypeptide reads, in one-letter code: Methionyl-tRNA formyltransferase (303 aa).

106–109 (SLLP) lines the (6S)-5,6,7,8-tetrahydrofolate pocket.

The protein belongs to the Fmt family.

It catalyses the reaction L-methionyl-tRNA(fMet) + (6R)-10-formyltetrahydrofolate = N-formyl-L-methionyl-tRNA(fMet) + (6S)-5,6,7,8-tetrahydrofolate + H(+). Its function is as follows. Attaches a formyl group to the free amino group of methionyl-tRNA(fMet). The formyl group appears to play a dual role in the initiator identity of N-formylmethionyl-tRNA by promoting its recognition by IF2 and preventing the misappropriation of this tRNA by the elongation apparatus. The chain is Methionyl-tRNA formyltransferase from Thermosipho melanesiensis (strain DSM 12029 / CIP 104789 / BI429).